A 206-amino-acid chain; its full sequence is Ribosomal RNA small subunit methyltransferase G (206 aa).

S-adenosyl-L-methionine-binding positions include G73, L78, 124-125 (VE), and R139.

This sequence belongs to the methyltransferase superfamily. RNA methyltransferase RsmG family.

It localises to the cytoplasm. The enzyme catalyses guanosine(527) in 16S rRNA + S-adenosyl-L-methionine = N(7)-methylguanosine(527) in 16S rRNA + S-adenosyl-L-homocysteine. In terms of biological role, specifically methylates the N7 position of guanine in position 527 of 16S rRNA. The sequence is that of Ribosomal RNA small subunit methyltransferase G from Sodalis glossinidius (strain morsitans).